A 450-amino-acid polypeptide reads, in one-letter code: Probable cysteine desulfurase, mitochondrial (450 aa).

A mitochondrion-targeting transit peptide spans 1-52; it reads MNRSILKFVKNGIISSSSRINNNGFINKNNNNRWFATLPQPNRGIAGEKQPI. Residues 120–121, Asn-200, Gln-228, and 248–250 contribute to the pyridoxal 5'-phosphate site; these read AT and SGH. Position 251 is an N6-(pyridoxal phosphate)lysine (Lys-251). A pyridoxal 5'-phosphate-binding site is contributed by Thr-288. The active-site Cysteine persulfide intermediate is the Cys-374. Position 374 (Cys-374) interacts with [2Fe-2S] cluster.

Belongs to the class-V pyridoxal-phosphate-dependent aminotransferase family. NifS/IscS subfamily. It depends on pyridoxal 5'-phosphate as a cofactor.

Its subcellular location is the mitochondrion. The protein resides in the nucleus. The enzyme catalyses (sulfur carrier)-H + L-cysteine = (sulfur carrier)-SH + L-alanine. Its function is as follows. Catalyzes the removal of elemental sulfur from cysteine to produce alanine. It supplies the inorganic sulfur for iron-sulfur (Fe-S) clusters. This chain is Probable cysteine desulfurase, mitochondrial (nfs1), found in Dictyostelium discoideum (Social amoeba).